The chain runs to 69 residues: MRTIISLLLLSAMVFAVIEAISLEEGLQLFEGERGCVGENQQCADWAGPHCCSGLRCKELSIWDSRCLG.

A signal peptide spans 1-20; sequence MRTIISLLLLSAMVFAVIEA. The propeptide occupies 21 to 34; that stretch reads ISLEEGLQLFEGER. Cystine bridges form between Cys-36-Cys-52 and Cys-43-Cys-57.

Belongs to the neurotoxin 01 (U2-agtx) family. Does not contain a cysteine at position 61 which disrupts the cysteine framework. As to expression, expressed by the venom gland.

Its subcellular location is the secreted. In Agelena orientalis (Funnel-web spider), this protein is U5-agatoxin-Ao1a.